The sequence spans 192 residues: dTTP/UTP pyrophosphatase (192 aa).

Asp70 functions as the Proton acceptor in the catalytic mechanism.

The protein belongs to the Maf family. YhdE subfamily. Requires a divalent metal cation as cofactor.

It localises to the cytoplasm. The catalysed reaction is dTTP + H2O = dTMP + diphosphate + H(+). It carries out the reaction UTP + H2O = UMP + diphosphate + H(+). In terms of biological role, nucleoside triphosphate pyrophosphatase that hydrolyzes dTTP and UTP. May have a dual role in cell division arrest and in preventing the incorporation of modified nucleotides into cellular nucleic acids. The sequence is that of dTTP/UTP pyrophosphatase from Alkaliphilus oremlandii (strain OhILAs) (Clostridium oremlandii (strain OhILAs)).